The chain runs to 135 residues: MNRFQLLSKGLRLIHKMSEEALAGVPLVHISPEGIFKYVMINVIDGGDASKAVIRGFADCTWHADIFDREEEVFKKLGLRAECPGGGRIEHNPDKKYLKVYGYSQGFGKADHAQTKRILATKYPDYTIETSDEGY.

Lys-37 is a binding site for substrate. The active-site Proton acceptor is the His-63. Residue Ser-104–Gly-106 coordinates substrate.

It belongs to the janus family.

Its function is as follows. JanA and janB regulate somatic sex differentiation. This chain is Sex-regulated protein janus-A (janA), found in Drosophila erecta (Fruit fly).